A 244-amino-acid polypeptide reads, in one-letter code: Lymphotoxin-beta (244 aa).

Topologically, residues 1 to 18 are cytoplasmic; it reads MGALGLEGRGGRLQGRGS. A helical; Signal-anchor for type II membrane protein transmembrane segment spans residues 19–48; sequence LLLAVAGATSLVTLLLAVPITVLAVLALVP. At 49–244 the chain is on the extracellular side; it reads QDQGGLVTET…KTFFGAVMVG (196 aa). In terms of domain architecture, THD spans 88–243; sequence PAAHLIGAPL…GKTFFGAVMV (156 aa). An N-linked (GlcNAc...) asparagine glycan is attached at asparagine 222.

Belongs to the tumor necrosis factor family. As to quaternary structure, heterotrimer of either two LTB and one LTA subunits or (less prevalent) one LTB and two LTA subunits. In terms of tissue distribution, spleen and thymus.

The protein localises to the membrane. Functionally, cytokine that binds to LTBR/TNFRSF3. May play a specific role in immune response regulation. Provides the membrane anchor for the attachment of the heterotrimeric complex to the cell surface. Isoform 2 is probably non-functional. This chain is Lymphotoxin-beta (LTB), found in Homo sapiens (Human).